A 924-amino-acid chain; its full sequence is Ubiquitin carboxyl-terminal hydrolase 5 (924 aa).

A DUSP domain is found at 15 to 145; sequence LSPEEERVFI…GPTLARRVIS (131 aa). Residues 64–83 are compositionally biased toward polar residues; it reads TNDGSSLSEHCDSPGSSTLK. The disordered stretch occupies residues 64–87; that stretch reads TNDGSSLSEHCDSPGSSTLKKPSR. One can recognise a USP domain in the interval 317-916; the sequence is TGLLNLGNTC…AAYVLFYRRK (600 aa). Residue Cys-326 is the Nucleophile of the active site. Residues 648 to 667 are compositionally biased toward basic and acidic residues; the sequence is REESVGKKGNSDSSIPERRS. The segment at 648–690 is disordered; the sequence is REESVGKKGNSDSSIPERRSARFNNTEEEDKVGGLKKAKKSNS. The Proton acceptor role is filled by His-874.

It belongs to the peptidase C19 family.

The catalysed reaction is Thiol-dependent hydrolysis of ester, thioester, amide, peptide and isopeptide bonds formed by the C-terminal Gly of ubiquitin (a 76-residue protein attached to proteins as an intracellular targeting signal).. Functionally, recognizes and hydrolyzes the peptide bond at the C-terminal Gly of ubiquitin. Involved in the processing of poly-ubiquitin precursors as well as that of ubiquitinated proteins. The polypeptide is Ubiquitin carboxyl-terminal hydrolase 5 (UBP5) (Arabidopsis thaliana (Mouse-ear cress)).